The sequence spans 390 residues: MAAALRLTPHMRQAYPVVAAPSVARLSTLDASKLTIETTTQPRERVEKTKLVFGHTFSDHMLKCKWDVNEGWAAPTISPYANLSLAPSSIVLHYAIECFEGMKAFRGDDDRIRLFRPNLNMDRLHRSSVRLALPDFDQDELLKCITELVIKDKDWIPAGRGYSLYLRPTHIGTAEYLGVGKSSSSLLFCINSPSGAYYSTGFKPVSLLADPAYVRAWPGGVGNTKGGCNYAPSIYPQSQAQAQGCQQVLWLFGEDHEVTEVGTMNLFMYWKNEQGEDELITPPLDGTILPGVTRQSIVDMARGWNEFKVSERKFNMGQVSRALKEGRVYEMFGAGTAATVCPIGQIKYLGEDLNVPLALGNSGELTNRIWTDIFDIQYGAVEHEWAPVIA.

Residue Lys-225 is modified to N6-(pyridoxal phosphate)lysine.

It belongs to the class-IV pyridoxal-phosphate-dependent aminotransferase family. In terms of assembly, homodimer. It depends on pyridoxal 5'-phosphate as a cofactor.

The enzyme catalyses L-leucine + 2-oxoglutarate = 4-methyl-2-oxopentanoate + L-glutamate. It catalyses the reaction L-isoleucine + 2-oxoglutarate = (S)-3-methyl-2-oxopentanoate + L-glutamate. The catalysed reaction is L-valine + 2-oxoglutarate = 3-methyl-2-oxobutanoate + L-glutamate. Catalyzes the first reaction in the catabolism of the essential branched chain amino acids leucine, isoleucine, and valine. In Monosiga brevicollis (Choanoflagellate), this protein is Branched-chain-amino-acid aminotransferase.